The chain runs to 310 residues: Tagatose-6-phosphate kinase (310 aa).

This sequence belongs to the carbohydrate kinase PfkB family. LacC subfamily.

The catalysed reaction is D-tagatofuranose 6-phosphate + ATP = D-tagatofuranose 1,6-bisphosphate + ADP + H(+). It functions in the pathway carbohydrate metabolism; D-tagatose 6-phosphate degradation; D-glyceraldehyde 3-phosphate and glycerone phosphate from D-tagatose 6-phosphate: step 1/2. The protein is Tagatose-6-phosphate kinase of Streptococcus agalactiae serotype Ia (strain ATCC 27591 / A909 / CDC SS700).